The primary structure comprises 557 residues: 2-isopropylmalate synthase (557 aa).

Positions 33–307 (PLWLSTDLRD…DPGLDFSDID (275 aa)) constitute a Pyruvate carboxyltransferase domain. Mg(2+) contacts are provided by Asp-42, His-246, His-248, and Asn-282. The tract at residues 439–557 (AETPYALKGH…LGQQASIRAA (119 aa)) is regulatory domain.

This sequence belongs to the alpha-IPM synthase/homocitrate synthase family. LeuA type 2 subfamily. Homodimer. Requires Mg(2+) as cofactor.

It is found in the cytoplasm. It carries out the reaction 3-methyl-2-oxobutanoate + acetyl-CoA + H2O = (2S)-2-isopropylmalate + CoA + H(+). The protein operates within amino-acid biosynthesis; L-leucine biosynthesis; L-leucine from 3-methyl-2-oxobutanoate: step 1/4. In terms of biological role, catalyzes the condensation of the acetyl group of acetyl-CoA with 3-methyl-2-oxobutanoate (2-ketoisovalerate) to form 3-carboxy-3-hydroxy-4-methylpentanoate (2-isopropylmalate). The sequence is that of 2-isopropylmalate synthase from Azotobacter vinelandii (strain DJ / ATCC BAA-1303).